Here is a 115-residue protein sequence, read N- to C-terminus: Transcription initiation factor IIA subunit 2 (115 aa).

The protein belongs to the TFIIA subunit 2 family. In terms of assembly, TFIIA is a heterodimer of the large unprocessed subunit 1 and a small subunit gamma.

The protein resides in the nucleus. In terms of biological role, TFIIA is a component of the transcription machinery of RNA polymerase II and plays an important role in transcriptional activation. TFIIA in a complex with tbp mediates transcriptional activity. This Dictyostelium discoideum (Social amoeba) protein is Transcription initiation factor IIA subunit 2 (gtf2a2).